The chain runs to 211 residues: Thymidylate kinase (211 aa).

ATP is bound at residue 7–14 (GIDGCGKT).

The protein belongs to the thymidylate kinase family.

It catalyses the reaction dTMP + ATP = dTDP + ADP. Phosphorylation of dTMP to form dTDP in both de novo and salvage pathways of dTTP synthesis. The protein is Thymidylate kinase of Anaplasma marginale (strain Florida).